The primary structure comprises 113 residues: Mitochondrial import inner membrane translocase subunit PAM16 like 1 (113 aa).

The N-terminal 48 residues, 1–48 (MAARVLASVIVMGSGIIARACTQAYRQALANASKTGVAHEATQTIKRG), are a transit peptide targeting the mitochondrion. Positions 55–104 (EARQILGVTEKSSWDEILKKYDTLFERNAQNGSFYLQSKVHRAKECLETA) are J-like.

The protein belongs to the TIM16/PAM16 family. Expressed at low levels in seedlings, rosettes and inflorescence.

Its subcellular location is the mitochondrion inner membrane. Functionally, regulates ATP-dependent protein translocation into the mitochondrial matrix. This is Mitochondrial import inner membrane translocase subunit PAM16 like 1 from Arabidopsis thaliana (Mouse-ear cress).